A 699-amino-acid polypeptide reads, in one-letter code: Cell pattern formation-associated protein StuA (699 aa).

Disordered stretches follow at residues 1–20 (MDGT…LLAP) and 31–97 (TPQF…QPEH). The span at 32–49 (PQFKSQQSQPQSQSQYPS) shows a compositional bias: low complexity. Residues 52–61 (NPDSYSSSSP) show a composition bias toward polar residues. The span at 75–84 (EDGEDYDQEE) shows a compositional bias: acidic residues. Positions 226-332 (RVTATLWEDE…HNIGALLYHP (107 aa)) constitute an HTH APSES-type domain. Residues 260 to 281 (GTKLLNVAGMTRGRRDGILKSE) constitute a DNA-binding region (H-T-H motif). 3 disordered regions span residues 372–594 (AMPT…MNSM), 599–618 (RRDD…DLNN), and 674–699 (PSYP…QSFG). Residues 376-423 (GYTSQQPLTNGHQSMANTPQPLTNGSQPPMNGSQTPMNGPQPPMQNGG) are compositionally biased toward polar residues. Basic and acidic residues-rich tracts occupy residues 428–438 (RVREDDDDLHR) and 478–491 (GLKR…DMHR). Positions 520 to 529 (NLHQPLSNGD) are enriched in polar residues. A compositionally biased stretch (basic and acidic residues) spans 535 to 545 (RGRDDDDDVHR). A compositionally biased stretch (polar residues) spans 566–594 (TSTSNDMLPQSPYYTLSNGAYQGPMMNSM). Residues 669–695 (TVAVSPSYPAGPGYELARPVTNVPRRQ) are nuclear localization domain.

The protein belongs to the EFG1/PHD1/stuA family.

It is found in the nucleus. Functionally, transcription factor that regulates asexual reproduction. Binds the StuA-response elements (StRE) with the consensus sequence 5'-(A/T)CGCG(T/A)N(A/C)-3' at the promoters of target genes. Controls the expression of the gene clusters involved in the production of deoxynivalenol (DON) and 15-acetyldeoxynivalenol (15ADON). Regulates the expression of genes involved in chitin and glucan metabolism. Also controls catalase activity and cell surface hydrophobicity. Plays an important role in pathogenicity. This Gibberella zeae (strain ATCC MYA-4620 / CBS 123657 / FGSC 9075 / NRRL 31084 / PH-1) (Wheat head blight fungus) protein is Cell pattern formation-associated protein StuA.